We begin with the raw amino-acid sequence, 55 residues long: Large ribosomal subunit protein bL33 (55 aa).

It belongs to the bacterial ribosomal protein bL33 family.

The chain is Large ribosomal subunit protein bL33 from Gluconacetobacter diazotrophicus (strain ATCC 49037 / DSM 5601 / CCUG 37298 / CIP 103539 / LMG 7603 / PAl5).